Consider the following 154-residue polypeptide: Cold shock domain-containing protein C2 (154 aa).

Phosphoserine is present on Ser19. Positions 38–62 (GGGIAPRDLPSPLPTKRTRTYSATA) are disordered. The 68-residue stretch at 69 to 136 (VFKGVCKQFS…KFQAVEVVLT (68 aa)) folds into the CSD domain.

The protein resides in the nucleus. Its subcellular location is the cytoplasm. In terms of biological role, RNA-binding factor which binds specifically to the very 3'-UTR ends of both histone H1 and H3.3 mRNAs, encompassing the polyadenylation signal. Might play a central role in the negative regulation of histone variant synthesis in the developing brain. This is Cold shock domain-containing protein C2 (Csdc2) from Mus musculus (Mouse).